The sequence spans 280 residues: Fructose-1,6-bisphosphatase class 1 (280 aa).

The Mg(2+) site is built by glutamate 64, aspartate 83, leucine 85, and aspartate 86. Substrate is bound by residues 86-89 (DGSS), tyrosine 189, and lysine 220. A Mg(2+)-binding site is contributed by glutamate 226.

Belongs to the FBPase class 1 family. Homotetramer. Requires Mg(2+) as cofactor.

Its subcellular location is the cytoplasm. It catalyses the reaction beta-D-fructose 1,6-bisphosphate + H2O = beta-D-fructose 6-phosphate + phosphate. It functions in the pathway carbohydrate biosynthesis; gluconeogenesis. This is Fructose-1,6-bisphosphatase class 1 from Campylobacter jejuni subsp. doylei (strain ATCC BAA-1458 / RM4099 / 269.97).